Reading from the N-terminus, the 416-residue chain is tRNA(Met) cytidine acetate ligase (416 aa).

Residues 7 to 20 (VAEY…HLYL), glycine 102, asparagine 166, and arginine 191 contribute to the ATP site.

It belongs to the TmcAL family.

It localises to the cytoplasm. The catalysed reaction is cytidine(34) in elongator tRNA(Met) + acetate + ATP = N(4)-acetylcytidine(34) in elongator tRNA(Met) + AMP + diphosphate. Functionally, catalyzes the formation of N(4)-acetylcytidine (ac(4)C) at the wobble position of elongator tRNA(Met), using acetate and ATP as substrates. First activates an acetate ion to form acetyladenylate (Ac-AMP) and then transfers the acetyl group to tRNA to form ac(4)C34. This is tRNA(Met) cytidine acetate ligase from Syntrophomonas wolfei subsp. wolfei (strain DSM 2245B / Goettingen).